Here is a 1024-residue protein sequence, read N- to C-terminus: Multidrug resistance protein MdtC (1024 aa).

Helical transmembrane passes span 12 to 32, 333 to 353, 360 to 380, 387 to 407, 435 to 455, 469 to 489, 528 to 548, 853 to 873, 875 to 895, 897 to 917, 953 to 973, and 984 to 1004; these read VATT…FSLL, EVER…FIFL, LIPA…MYLC, LSLM…IVVL, VLSM…MAGL, VAIG…CAWL, WVMV…ISIP, LWLI…LYES, VHPL…LLAL, LFDA…IGIV, PIIM…LSSG, and ITIV…TPVI.

This sequence belongs to the resistance-nodulation-cell division (RND) (TC 2.A.6) family. MdtC subfamily. Part of a tripartite efflux system composed of MdtA, MdtB and MdtC. MdtC forms a heteromultimer with MdtB.

It is found in the cell inner membrane. This Yersinia pseudotuberculosis serotype IB (strain PB1/+) protein is Multidrug resistance protein MdtC.